Consider the following 601-residue polypeptide: Specifically androgen-regulated gene protein (601 aa).

Disordered regions lie at residues 1-41 (MPER…SSYD), 56-538 (ETIG…TGKD), and 551-601 (EQEQ…LLKE). Residues 20–39 (GSCDSMMSSTSTRSGSSDSS) show a composition bias toward low complexity. A compositionally biased stretch (polar residues) spans 100-118 (TITQQGRTPRTVTESSSSH). Phosphoserine occurs at positions 131 and 133. Positions 142–157 (RSQNFRKSTTQASSHN) are enriched in polar residues. Positions 174–190 (SQSSQPRQAPASPQEAA) are enriched in low complexity. Positions 203–213 (AFRDTQPEQCR) are enriched in basic and acidic residues. Polar residues-rich tracts occupy residues 224–236 (QGHTPQLHTPSSS) and 307–316 (LKSSRSSFHS). Residues 342-352 (EQRKARKEALE) are compositionally biased toward basic and acidic residues. Residues 384-414 (LSPAPGLAQPAAPAQASAAIPAAGKALAQAP) show a composition bias toward low complexity. Pro residues predominate over residues 415-429 (APAPGPAQGPLPMKS). Over residues 464-485 (LTLQESNTPGLRQMNFKSNTLE) the composition is skewed to polar residues. Phosphoserine is present on S519. Over residues 585 to 601 (PNEHRREALKKLGLLKE) the composition is skewed to basic and acidic residues.

This sequence belongs to the SARG family. As to expression, highly expressed in prostate.

The protein localises to the cytoplasm. Putative androgen-specific receptor. This chain is Specifically androgen-regulated gene protein (SARG), found in Homo sapiens (Human).